We begin with the raw amino-acid sequence, 534 residues long: Inosine-5'-monophosphate dehydrogenase (534 aa).

2 consecutive CBS domains span residues 117–181 (YVMQ…GTPI) and 190–255 (TTPI…PMAS). Residues 292-294 (DSS) and 342-344 (GMG) each bind NAD(+). Residues glycine 344 and glycine 346 each contribute to the K(+) site. Serine 347 serves as a coordination point for IMP. K(+) is bound at residue cysteine 349. Cysteine 349 (thioimidate intermediate) is an active-site residue. Residues 382–384 (DGG), 405–406 (GG), and 430–434 (YRGMG) each bind IMP. Catalysis depends on arginine 448, which acts as the Proton acceptor. An IMP-binding site is contributed by glutamine 461. Residues glutamate 520, glycine 521, and glycine 522 each coordinate K(+).

It belongs to the IMPDH/GMPR family. Homotetramer. The cofactor is K(+).

It localises to the cytoplasm. The enzyme catalyses IMP + NAD(+) + H2O = XMP + NADH + H(+). Its pathway is purine metabolism; XMP biosynthesis via de novo pathway; XMP from IMP: step 1/1. With respect to regulation, mycophenolic acid (MPA) is a non-competitive inhibitor that prevents formation of the closed enzyme conformation by binding to the same site as the amobile flap. In contrast, mizoribine monophosphate (MZP) is a competitive inhibitor that induces the closed conformation. MPA is a potent inhibitor of mammalian IMPDHs but a poor inhibitor of the bacterial enzymes. MZP is a more potent inhibitor of bacterial IMPDH. Its function is as follows. Catalyzes the conversion of inosine 5'-phosphate (IMP) to xanthosine 5'-phosphate (XMP), the first committed and rate-limiting step in the de novo synthesis of guanine nucleotides, and therefore plays an important role in the regulation of cell growth. The sequence is that of Inosine-5'-monophosphate dehydrogenase from Caenorhabditis elegans.